A 471-amino-acid chain; its full sequence is 3-isopropylmalate dehydratase large subunit (471 aa).

Residues C347, C407, and C410 each contribute to the [4Fe-4S] cluster site.

This sequence belongs to the aconitase/IPM isomerase family. LeuC type 1 subfamily. As to quaternary structure, heterodimer of LeuC and LeuD. [4Fe-4S] cluster is required as a cofactor.

It carries out the reaction (2R,3S)-3-isopropylmalate = (2S)-2-isopropylmalate. It functions in the pathway amino-acid biosynthesis; L-leucine biosynthesis; L-leucine from 3-methyl-2-oxobutanoate: step 2/4. Catalyzes the isomerization between 2-isopropylmalate and 3-isopropylmalate, via the formation of 2-isopropylmaleate. The chain is 3-isopropylmalate dehydratase large subunit from Anoxybacillus flavithermus (strain DSM 21510 / WK1).